Reading from the N-terminus, the 237-residue chain is Probable transcriptional regulatory protein PSHAa1370 (237 aa).

The protein belongs to the TACO1 family.

The protein resides in the cytoplasm. In Pseudoalteromonas translucida (strain TAC 125), this protein is Probable transcriptional regulatory protein PSHAa1370.